Reading from the N-terminus, the 690-residue chain is Amino-acid acetyltransferase, mitochondrial (690 aa).

The interval 62 to 93 is disordered; it reads RFPSVKKPKPPIPRQNQGAVETQSGKENEKPG. A compositionally biased stretch (polar residues) spans 75 to 84; that stretch reads RQNQGAVETQ. The N-acetyltransferase domain maps to 508-679; it reads DGHHLTLDDP…DYEAVCRSIQ (172 aa).

It belongs to the acetyltransferase family.

The protein resides in the mitochondrion. It catalyses the reaction L-glutamate + acetyl-CoA = N-acetyl-L-glutamate + CoA + H(+). It functions in the pathway amino-acid biosynthesis; L-arginine biosynthesis; N(2)-acetyl-L-ornithine from L-glutamate: step 1/4. Functionally, N-acetylglutamate synthase involved in arginine biosynthesis. This Talaromyces stipitatus (strain ATCC 10500 / CBS 375.48 / QM 6759 / NRRL 1006) (Penicillium stipitatum) protein is Amino-acid acetyltransferase, mitochondrial (arg2).